We begin with the raw amino-acid sequence, 109 residues long: SIAFSKAVFSEFLATLLFVFFGLGSALNWPQALPSGLQIAMAFGLAIGTLVQTLGHISGAHINPAVTVACLVGCHVSFLRAIFYVAAQLLGAVAGAALLHELTPPDIRG.

Over 1–6 the chain is Cytoplasmic; the sequence is SIAFSK. A helical membrane pass occupies residues 7 to 27; the sequence is AVFSEFLATLLFVFFGLGSAL. The Extracellular segment spans residues 28 to 35; that stretch reads NWPQALPS. The helical transmembrane segment at 36–54 threads the bilayer; that stretch reads GLQIAMAFGLAIGTLVQTL. Residues 55-59 lie on the Cytoplasmic side of the membrane; the sequence is GHISG. Positions 60–69 form an intramembrane region, discontinuously helical; sequence AHINPAVTVA. An NPA 1 motif is present at residues 63-65; it reads NPA. At 70–80 the chain is on the cytoplasmic side; it reads CLVGCHVSFLR. The chain crosses the membrane as a helical span at residues 81-102; that stretch reads AIFYVAAQLLGAVAGAALLHEL. At 103–109 the chain is on the extracellular side; the sequence is TPPDIRG.

Belongs to the MIP/aquaporin (TC 1.A.8) family. In terms of assembly, homotetramer. Serine phosphorylation is necessary and sufficient for expression at the apical membrane. Endocytosis is not phosphorylation-dependent. In terms of processing, N-glycosylated.

It localises to the apical cell membrane. Its subcellular location is the basolateral cell membrane. It is found in the cell membrane. The protein resides in the cytoplasmic vesicle membrane. The protein localises to the golgi apparatus. It localises to the trans-Golgi network membrane. It catalyses the reaction H2O(in) = H2O(out). It carries out the reaction glycerol(in) = glycerol(out). Its function is as follows. Forms a water-specific channel that provides the plasma membranes of renal collecting duct with high permeability to water, thereby permitting water to move in the direction of an osmotic gradient. Plays an essential role in renal water homeostasis. Could also be permeable to glycerol. The chain is Aquaporin-2 from Orycteropus afer (Aardvark).